A 179-amino-acid polypeptide reads, in one-letter code: Cell division protein SepF (179 aa).

The interval 22–55 (LPYEKRDEPVFTSVNSSQEPALPMNQPSQSAGTK) is disordered. The span at 33 to 55 (TSVNSSQEPALPMNQPSQSAGTK) shows a compositional bias: polar residues.

The protein belongs to the SepF family. Homodimer. Interacts with FtsZ.

It localises to the cytoplasm. Cell division protein that is part of the divisome complex and is recruited early to the Z-ring. Probably stimulates Z-ring formation, perhaps through the cross-linking of FtsZ protofilaments. Its function overlaps with FtsA. This Streptococcus pneumoniae (strain Taiwan19F-14) protein is Cell division protein SepF.